The primary structure comprises 1159 residues: ABC transporter G family member 24 (1159 aa).

2 helical membrane-spanning segments follow: residues 11–31 (FNSI…GNNC) and 415–435 (VGSG…FLIF). The region spanning 454 to 707 (LSFHNISCYV…FIKQKIAGMT (254 aa)) is the ABC transporter domain. Position 497–504 (497–504 (GLSGSGKT)) interacts with ATP. The segment at 752 to 846 (QSTSPALSSN…DNNNKNNDDD (95 aa)) is disordered. 2 stretches are compositionally biased toward low complexity: residues 759–768 (SSNSNNSDIN) and 775–784 (INNPHNQNIH). The span at 785 to 795 (HQQHHHHHRHI) shows a compositional bias: basic residues. The segment covering 822–841 (DNINNNNNNNKVKNNDNNNK) has biased composition (low complexity). In terms of domain architecture, ABC transmembrane type-2 spans 902–1154 (FLLRTTYFVH…LLAYVFLRFL (253 aa)). 6 helical membrane-spanning segments follow: residues 909–929 (FVHI…PANL), 937–957 (FGAM…SLDL), 1005–1025 (YMIG…SLVL), 1047–1067 (ANMV…FLLA), 1074–1094 (YLIG…PVVN), and 1135–1155 (VLLG…RFLV).

It belongs to the ABC transporter superfamily. ABCG family. Eye pigment precursor importer (TC 3.A.1.204) subfamily.

It is found in the membrane. The protein is ABC transporter G family member 24 (abcG24) of Dictyostelium discoideum (Social amoeba).